A 1055-amino-acid polypeptide reads, in one-letter code: Protein SUPPRESSOR OF QUENCHING 1, chloroplastic (1055 aa).

The N-terminal 56 residues, 1–56, are a transit peptide targeting the chloroplast; sequence MALKLTSPPSVFSQSRRLSSSSLIPIRSKSTFTGFRSRTGVYLSKTTALQSSTKLS. Valine 57 bears the N-acetylvaline mark. Residues 59 to 327 lie on the Stromal side of the membrane; sequence AESPAATIAT…FQGSRRDILR (269 aa). Aspartate 80 (nucleophile) is an active-site residue. Mg(2+) is bound by residues aspartate 80 and aspartate 82. Aspartate 80 contacts substrate. Aspartate 82 functions as the Proton donor in the catalytic mechanism. Substrate-binding positions include glutamate 89, 118 to 122, 141 to 144, and 183 to 189; these read TGEAK, AKER, and SSADRIK. Aspartate 242 lines the Mg(2+) pocket. The chain crosses the membrane as a helical span at residues 328–345; it reads YGSLGIALSCVYFAATNW. Residues 346–1055 lie on the Lumenal side of the membrane; the sequence is KAMQYASPKA…AGGLQLQGTR (710 aa). Residues 359 to 536 form the Thioredoxin domain; sequence ALVGAKSPSF…LDDVVAAALT (178 aa). Cysteine 431 and cysteine 434 form a disulfide bridge. NHL repeat units follow at residues 565–597, 611–647, 673–712, 802–832, and 854–887; these read PLKF…TDLE, GFQD…NHAL, GRKG…YSVL, LQHP…LDPV, and GAQL…IDLN.

In the N-terminal section; belongs to the HAD-like hydrolase superfamily. The protein in the C-terminal section; belongs to the thioredoxin family. Mg(2+) is required as a cofactor.

It localises to the plastid. The protein resides in the chloroplast thylakoid membrane. Functionally, required to maintain light harvesting efficiency, especially during nonphotochemical quenching (NPQ) recovery, via the regulation of chlorophyll excited-state lifetime probably by preventing the formation of a slowly reversible form of antenna quenching. The protein is Protein SUPPRESSOR OF QUENCHING 1, chloroplastic of Arabidopsis thaliana (Mouse-ear cress).